A 471-amino-acid chain; its full sequence is Putative multidrug resistance protein MdtD (471 aa).

Topologically, residues M1 to Q11 are periplasmic. Residues L12–A32 traverse the membrane as a helical segment. Over L33–H48 the chain is Cytoplasmic. Residues M49 to A69 traverse the membrane as a helical segment. The Periplasmic segment spans residues D70–N76. The chain crosses the membrane as a helical span at residues I77–T97. Topologically, residues L98–L101 are cytoplasmic. The helical transmembrane segment at L102 to M124 threads the bilayer. At K125–T137 the chain is on the periplasmic side. A helical transmembrane segment spans residues F138–V158. The Cytoplasmic segment spans residues E159–H164. The helical transmembrane segment at W165–M185 threads the bilayer. Residues P186–D196 are Periplasmic-facing. A helical membrane pass occupies residues L197 to S217. Topologically, residues K218–P224 are cytoplasmic. The chain crosses the membrane as a helical span at residues L225–A245. The Periplasmic segment spans residues Q246–T262. The chain crosses the membrane as a helical span at residues F263–M283. Residues T284–P285 are Cytoplasmic-facing. A helical membrane pass occupies residues V286 to M306. Over V307 to T341 the chain is Periplasmic. A helical transmembrane segment spans residues L342–L362. The Cytoplasmic segment spans residues Q363 to S395. A helical transmembrane segment spans residues M396–F416. Residues G417–T430 are Periplasmic-facing. Residues V431–A451 form a helical membrane-spanning segment. Over R452–Q471 the chain is Cytoplasmic.

Belongs to the major facilitator superfamily. TCR/Tet family.

The protein localises to the cell inner membrane. The polypeptide is Putative multidrug resistance protein MdtD (Escherichia coli O6:H1 (strain CFT073 / ATCC 700928 / UPEC)).